The primary structure comprises 239 residues: Ribose-5-phosphate isomerase A (239 aa).

Residues 40-43 (SGST), 96-99 (DGAD), and 110-113 (KGGG) each bind substrate. Residue glutamate 119 is the Proton acceptor of the active site. A substrate-binding site is contributed by lysine 137.

This sequence belongs to the ribose 5-phosphate isomerase family. In terms of assembly, homodimer.

The catalysed reaction is aldehydo-D-ribose 5-phosphate = D-ribulose 5-phosphate. It participates in carbohydrate degradation; pentose phosphate pathway; D-ribose 5-phosphate from D-ribulose 5-phosphate (non-oxidative stage): step 1/1. Catalyzes the reversible conversion of ribose-5-phosphate to ribulose 5-phosphate. This Methanococcus maripaludis (strain C7 / ATCC BAA-1331) protein is Ribose-5-phosphate isomerase A.